The following is a 636-amino-acid chain: Rust resistance kinase Lr10 (636 aa).

An N-terminal signal peptide occupies residues 1–24 (MSKLLVIALLLLPLINHGIYLATA). Residues 25 to 276 (WDDQDFFKYC…MPDPHGSHIK (252 aa)) are Extracellular-facing. N-linked (GlcNAc...) asparagine glycosylation is found at Asn56, Asn177, and Asn222. The helical transmembrane segment at 277 to 297 (VIAATSSVAAFVALLLTVATV) threads the bilayer. The Cytoplasmic segment spans residues 298–636 (LYLSLKTRYN…FVSSENELMS (339 aa)). The Protein kinase domain maps to 339 to 628 (RRFKEKVGQG…SLQMPPKPFV (290 aa)). ATP contacts are provided by residues 345-353 (VGQGGFGSV) and Lys367. Catalysis depends on Asp466, which acts as the Proton acceptor.

The protein belongs to the protein kinase superfamily. Ser/Thr protein kinase family. Specifically expressed in the aerial parts of the plant.

It localises to the cell membrane. It catalyses the reaction L-seryl-[protein] + ATP = O-phospho-L-seryl-[protein] + ADP + H(+). The enzyme catalyses L-threonyl-[protein] + ATP = O-phospho-L-threonyl-[protein] + ADP + H(+). This Triticum aestivum (Wheat) protein is Rust resistance kinase Lr10.